The chain runs to 1083 residues: Error-prone DNA polymerase (1083 aa).

The protein belongs to the DNA polymerase type-C family. DnaE2 subfamily.

The protein resides in the cytoplasm. It carries out the reaction DNA(n) + a 2'-deoxyribonucleoside 5'-triphosphate = DNA(n+1) + diphosphate. Its function is as follows. DNA polymerase involved in damage-induced mutagenesis and translesion synthesis (TLS). It is not the major replicative DNA polymerase. This Xanthomonas oryzae pv. oryzae (strain PXO99A) protein is Error-prone DNA polymerase.